We begin with the raw amino-acid sequence, 143 residues long: Ribosome-binding factor A (143 aa).

The interval 119–143 is disordered; it reads KAKQQQFTPDTPDNSESVDGEKEQD. Over residues 122–133 the composition is skewed to polar residues; it reads QQQFTPDTPDNS.

The protein belongs to the RbfA family. In terms of assembly, monomer. Binds 30S ribosomal subunits, but not 50S ribosomal subunits or 70S ribosomes.

The protein localises to the cytoplasm. In terms of biological role, one of several proteins that assist in the late maturation steps of the functional core of the 30S ribosomal subunit. Associates with free 30S ribosomal subunits (but not with 30S subunits that are part of 70S ribosomes or polysomes). Required for efficient processing of 16S rRNA. May interact with the 5'-terminal helix region of 16S rRNA. The sequence is that of Ribosome-binding factor A from Shewanella frigidimarina (strain NCIMB 400).